The following is a 964-amino-acid chain: Collagen alpha-1(I) chain (964 aa).

Residues 1-964 (GGISVPGPMG…PGPPGPPGPP (964 aa)) are disordered. 4-hydroxyproline is present on residues Pro18, Pro21, Pro24, Pro33, Pro36, Pro39, Pro53, Pro68, Pro74, Pro83, and Pro89. The segment covering 56-70 (NGDDGEAGKPGRPGE) has biased composition (basic and acidic residues). 5-hydroxylysine; alternate is present on Lys92. O-linked (Gal...) hydroxylysine; alternate glycosylation occurs at Lys92. The residue at position 98 (Ser98) is a Phosphoserine. Composition is skewed to low complexity over residues 106-117 (DAGPAGPKQMGP) and 126-144 (PGAS…TGAA). 12 positions are modified to 4-hydroxyproline: Pro126, Pro147, Pro156, Pro159, Pro186, Pro189, Pro201, Pro207, Pro216, Pro222, Pro225, and Pro240. The segment covering 146 to 158 (PPGPTGPAGPPGF) has biased composition (pro residues). Positions 192 to 231 (AGAAGPAGNPGADGQPGAKGANGAPGIAGAPGFPGARGPS) are enriched in low complexity. Lys243 is modified (5-hydroxylysine). 8 positions are modified to 4-hydroxyproline: Pro249, Pro252, Pro260, Pro269, Pro284, Pro290, Pro299, and Pro305. The segment covering 294–303 (GERGGPGSRG) has biased composition (gly residues). Position 314 is a 5-hydroxylysine (Lys314). A 4-hydroxyproline mark is found at Pro323, Pro332, Pro338, Pro344, Pro353, Pro356, Pro365, Pro374, Pro379, Pro391, Pro400, Pro409, Pro412, Pro430, Pro447, Pro453, Pro459, Pro465, Pro471, Pro477, Pro489, Pro498, Pro510, and Pro519. Low complexity predominate over residues 347–373 (KGLTGSPGSPGPDGKTGPPGPAGQDGR). Positions 381 to 400 (ARGQAGVMGFPGPKGAAGEP) are enriched in low complexity. Positions 459 to 468 (PGEAGKPGEQ) are enriched in low complexity. A 5-hydroxylysine modification is found at Lys531. 4-hydroxyproline occurs at positions 537, 552, and 558. Positions 564-578 (SGPSGPAGPTGARGA) are enriched in low complexity. Ser567 is subject to Phosphoserine. A 4-hydroxyproline mark is found at Pro579, Pro585, Pro588, Pro597, Pro603, Pro621, Pro630, and Pro639. The span at 591 to 618 (AGFAGPPGADGQPGAKGEPGDAGAKGDA) shows a compositional bias: low complexity. Over residues 620 to 632 (PPGPAGPTGPPGP) the composition is skewed to pro residues. The residue at position 642 (Lys642) is a 5-hydroxylysine. Low complexity predominate over residues 647–663 (SAGPPGATGFPGAAGRV). 4-hydroxyproline occurs at positions 651 and 657. A 3-hydroxyproline modification is found at Pro665. Residues Pro666, Pro675, Pro678, Pro704, Pro712, Pro721, Pro739, Pro748, Pro751, Pro757, Pro772, Pro778, Pro784, Pro792, and Pro798 each carry the 4-hydroxyproline modification. Residues 709-721 (KGSPGADGPAGAP) show a composition bias toward low complexity. Positions 771 to 781 (PPGPMGPPGLA) are enriched in pro residues. Lys807 bears the 5-hydroxylysine mark. The span at 815–830 (PGPPGAPGAPGAPGPV) shows a compositional bias: pro residues. Residues Pro818, Pro821, and Pro824 each carry the 4-hydroxyproline modification. Residues 850–864 (AGPAGARGPAGPQGP) show a composition bias toward low complexity. Basic and acidic residues predominate over residues 865-879 (RGDKGETGEQGDRGI). Lys868 carries the 5-hydroxylysine modification. Lys880 bears the 5-hydroxylysine; alternate mark. O-linked (Gal...) hydroxylysine; alternate glycosylation occurs at Lys880. 4-hydroxyproline is present on residues Pro895, Pro898, Pro916, and Pro931. The segment covering 898–931 (PGEQGPSGASGPAGPRGPPGSAGSPGKDGLNGLP) has biased composition (low complexity). The residue at position 936 (Pro936) is a 3-hydroxyproline. The residue at position 937 (Pro937) is a 4-hydroxyproline. The segment covering 949 to 964 (VGPPGPPGPPGPPGPP) has biased composition (pro residues). The residue at position 951 (Pro951) is a 3-hydroxyproline. Pro952 carries the post-translational modification 4-hydroxyproline. Pro954 is modified (3-hydroxyproline). 4-hydroxyproline is present on Pro955. Position 957 is a 3-hydroxyproline (Pro957). A 4-hydroxyproline mark is found at Pro958, Pro961, and Pro964.

It belongs to the fibrillar collagen family. Trimers of one alpha 2(I) and two alpha 1(I) chains. Post-translationally, contains mostly 4-hydroxyproline. Proline residues at the third position of the tripeptide repeating unit (G-X-Y) are hydroxylated in some or all of the chains. Contains 3-hydroxyproline at a few sites. This modification occurs on the first proline residue in the sequence motif Gly-Pro-Hyp, where Hyp is 4-hydroxyproline. In terms of processing, lysine residues at the third position of the tripeptide repeating unit (G-X-Y) are 5-hydroxylated in some or all of the chains. Post-translationally, O-glycosylated on hydroxylated lysine residues. The O-linked glycan consists of a Glc-Gal disaccharide. In terms of tissue distribution, expressed in bones.

It localises to the secreted. The protein localises to the extracellular space. Its subcellular location is the extracellular matrix. In terms of biological role, type I collagen is a member of group I collagen (fibrillar forming collagen). In Parocnus serus (Greater Haitian ground sloth), this protein is Collagen alpha-1(I) chain.